The following is a 725-amino-acid chain: N-alpha-acetyltransferase 35, NatC auxiliary subunit (725 aa).

At Ser-187 the chain carries Phosphoserine. The disordered stretch occupies residues 548–573 (ERIMEEQQKGRSSKKTKKKKKVRPLS). Positions 558-571 (RSSKKTKKKKKVRP) are enriched in basic residues.

The protein belongs to the MAK10 family. In terms of assembly, component of the N-terminal acetyltransferase C (NatC) complex, which is composed of NAA35, NAA38 and NAA30.

The protein localises to the cytoplasm. Its function is as follows. Auxillary component of the N-terminal acetyltransferase C (NatC) complex which catalyzes acetylation of N-terminal methionine residues. N-terminal acetylation protects proteins from ubiquitination and degradation by the N-end rule pathway. Involved in regulation of apoptosis and proliferation of smooth muscle cells. This chain is N-alpha-acetyltransferase 35, NatC auxiliary subunit (NAA35), found in Homo sapiens (Human).